Here is a 2371-residue protein sequence, read N- to C-terminus: NBAS subunit of NRZ tethering complex (2371 aa).

The segment at 1 to 1035 (MAAPESGPAL…KTEATTKLHD (1035 aa)) is interaction with USE1. WD repeat units follow at residues 130–169 (DPKP…LFVI) and 316–355 (QEQD…QQGE). Phosphoserine is present on residues Ser-473 and Ser-475. Positions 1036–2371 (MVDQLEQILS…TALRAAQHWV (1336 aa)) are interaction with ZW10 and RINT1. The residue at position 1057 (Lys-1057) is an N6-acetyllysine.

In terms of assembly, component of the NRZ complex composed of NBAS, ZW10 and RINT1/TIP20L; NRZ associates with SNAREs STX18, USE1, BNIP1/SEC20L and SEC22B (the assembly has been described as syntaxin 18 complex); links NRZ to SNARE USE1. Broadly expressed, with highest levels in heart and skeletal muscle, and lowest levels in liver, small intestine and thymus. Well expressed in retinal ganglion cells, epidermal skin cells, and leukocytes. Up-regulated together with N-myc in some neuroblastoma cell lines.

The protein localises to the cytoplasm. It is found in the endoplasmic reticulum. Its subcellular location is the endoplasmic reticulum membrane. Functionally, involved in Golgi-to-endoplasmic reticulum (ER) retrograde transport; the function is proposed to depend on its association in the NRZ complex which is believed to play a role in SNARE assembly at the ER. Required for normal embryonic development. May play a role in the nonsense-mediated decay pathway of mRNAs containing premature stop codons. This is NBAS subunit of NRZ tethering complex from Homo sapiens (Human).